A 284-amino-acid chain; its full sequence is tRNA pseudouridine synthase B (284 aa).

Asp-40 functions as the Nucleophile in the catalytic mechanism.

This sequence belongs to the pseudouridine synthase TruB family. Type 1 subfamily.

It catalyses the reaction uridine(55) in tRNA = pseudouridine(55) in tRNA. Responsible for synthesis of pseudouridine from uracil-55 in the psi GC loop of transfer RNAs. The polypeptide is tRNA pseudouridine synthase B (Helicobacter hepaticus (strain ATCC 51449 / 3B1)).